We begin with the raw amino-acid sequence, 215 residues long: Adenylate kinase (215 aa).

10–15 (GAGKGT) lines the ATP pocket. The segment at 30–59 (STGDMLRSAIKSGSELGKKAKQVMDAGQLV) is NMP. Residues Thr-31, Arg-36, 57 to 59 (QLV), 85 to 88 (GFPR), and Gln-92 each bind AMP. The segment at 122–159 (GRRVHPGSGRVYHVEHNPPKVEGKDDETGEDLVVRPDD) is LID. Residues Arg-123 and 132–133 (VY) contribute to the ATP site. A disordered region spans residues 128–151 (GSGRVYHVEHNPPKVEGKDDETGE). Residues 133–144 (YHVEHNPPKVEG) are compositionally biased toward basic and acidic residues. AMP is bound by residues Arg-156 and Arg-167. Residues 195–215 (KIDGTQPVERVSEQLGDLLRK) are disordered. ATP is bound at residue Gln-200.

It belongs to the adenylate kinase family. In terms of assembly, monomer.

It localises to the cytoplasm. It carries out the reaction AMP + ATP = 2 ADP. The protein operates within purine metabolism; AMP biosynthesis via salvage pathway; AMP from ADP: step 1/1. Catalyzes the reversible transfer of the terminal phosphate group between ATP and AMP. Plays an important role in cellular energy homeostasis and in adenine nucleotide metabolism. This is Adenylate kinase from Idiomarina loihiensis (strain ATCC BAA-735 / DSM 15497 / L2-TR).